We begin with the raw amino-acid sequence, 150 residues long: MKDKVYKRPVSILVVIYAQDTKRVLMLQRRDDPDFWQSVTGSVEEGETAPQAAMREVKEEVTIDVVAEQLTLIDCQRTVEFEIFSHLRHRYAPGVTRNTESWFCLALPHERQIVFTEHLAYKWLDAPAAAALTKSWSNRQAIEQFVINAA.

Positions 5–146 (VYKRPVSILV…SNRQAIEQFV (142 aa)) constitute a Nudix hydrolase domain. Lys7, Arg29, and Thr40 together coordinate substrate. The short motif at 41-62 (GSVEEGETAPQAAMREVKEEVT) is the Nudix box element. Mg(2+) contacts are provided by Glu56 and Glu60. 81-84 (FEIF) is a binding site for substrate. Position 117 (Glu117) interacts with Mg(2+). Residue Ser135 coordinates substrate.

Belongs to the Nudix hydrolase family. Mg(2+) is required as a cofactor.

It carries out the reaction 7,8-dihydroneopterin 3'-triphosphate + H2O = 7,8-dihydroneopterin 3'-phosphate + diphosphate + H(+). Its function is as follows. Catalyzes the hydrolysis of dihydroneopterin triphosphate to dihydroneopterin monophosphate and pyrophosphate. Required for efficient folate biosynthesis. Can also hydrolyze nucleoside triphosphates with a preference for dATP. The chain is Dihydroneopterin triphosphate diphosphatase (nudB) from Escherichia coli O157:H7.